The sequence spans 565 residues: NAD-dependent malic enzyme (565 aa).

Y104 functions as the Proton donor in the catalytic mechanism. R157 contacts NAD(+). The Proton acceptor role is filled by K175. The a divalent metal cation site is built by E246, D247, and D270. NAD(+) contacts are provided by D270 and N418.

It belongs to the malic enzymes family. In terms of assembly, homotetramer. It depends on Mg(2+) as a cofactor. Mn(2+) serves as cofactor.

The enzyme catalyses (S)-malate + NAD(+) = pyruvate + CO2 + NADH. The catalysed reaction is oxaloacetate + H(+) = pyruvate + CO2. This is NAD-dependent malic enzyme from Escherichia coli (strain K12 / MC4100 / BW2952).